Reading from the N-terminus, the 218-residue chain is MGQKINPLGFRVGVTQQHYSYWFAQPKNYSKFLEEDEKVRTCIEKYVQKQIKNSSNYGGIARIEIEGKTDLLQIEIYTGFPDSLVEENGLGIDKLRTNIENLLKKKSQKIQITLKNVLQPYGEPRILAEHIALQLENRVAFRRTVKKAIELAKKTDIKGIKIQIAGRLNGNEIARVEWVREGRVPLQTIRAHINYCYYPAQTIYGVLGIKIWVFRDEE.

The KH type-2 domain occupies 47–118; the sequence is VQKQIKNSSN…KIQITLKNVL (72 aa).

It belongs to the universal ribosomal protein uS3 family. In terms of assembly, part of the 30S ribosomal subunit.

It is found in the plastid. Its subcellular location is the chloroplast. The sequence is that of Small ribosomal subunit protein uS3c (rps3) from Angiopteris evecta (Mule's foot fern).